The primary structure comprises 577 residues: Sulfite reductase [NADPH] hemoprotein beta-component (577 aa).

Residues C436, C442, C481, and C485 each coordinate [4Fe-4S] cluster. C485 contributes to the siroheme binding site.

The protein belongs to the nitrite and sulfite reductase 4Fe-4S domain family. In terms of assembly, alpha(8)-beta(8). The alpha component is a flavoprotein, the beta component is a hemoprotein. Siroheme serves as cofactor. It depends on [4Fe-4S] cluster as a cofactor.

The enzyme catalyses hydrogen sulfide + 3 NADP(+) + 3 H2O = sulfite + 3 NADPH + 4 H(+). It functions in the pathway sulfur metabolism; hydrogen sulfide biosynthesis; hydrogen sulfide from sulfite (NADPH route): step 1/1. Its function is as follows. Component of the sulfite reductase complex that catalyzes the 6-electron reduction of sulfite to sulfide. This is one of several activities required for the biosynthesis of L-cysteine from sulfate. The chain is Sulfite reductase [NADPH] hemoprotein beta-component from Shewanella woodyi (strain ATCC 51908 / MS32).